Here is a 440-residue protein sequence, read N- to C-terminus: Chromosome partition protein MukF (440 aa).

Residues 208–236 are leucine-zipper; it reads LSETSGTLRELQDTLEAAGDKLQANLLRI.

Belongs to the MukF family. In terms of assembly, interacts, and probably forms a ternary complex, with MukE and MukB via its C-terminal region. The complex formation is stimulated by calcium or magnesium. It is required for an interaction between MukE and MukB.

It is found in the cytoplasm. The protein resides in the nucleoid. In terms of biological role, involved in chromosome condensation, segregation and cell cycle progression. May participate in facilitating chromosome segregation by condensation DNA from both sides of a centrally located replisome during cell division. Not required for mini-F plasmid partitioning. Probably acts via its interaction with MukB and MukE. Overexpression results in anucleate cells. It has a calcium binding activity. The protein is Chromosome partition protein MukF of Salmonella typhi.